Consider the following 206-residue polypeptide: Holliday junction branch migration complex subunit RuvA (206 aa).

The segment at M1 to N64 is domain I. The interval K65–P143 is domain II. A flexible linker region spans residues A144 to Y157. A domain III region spans residues S158–V206.

The protein belongs to the RuvA family. Homotetramer. Forms an RuvA(8)-RuvB(12)-Holliday junction (HJ) complex. HJ DNA is sandwiched between 2 RuvA tetramers; dsDNA enters through RuvA and exits via RuvB. An RuvB hexamer assembles on each DNA strand where it exits the tetramer. Each RuvB hexamer is contacted by two RuvA subunits (via domain III) on 2 adjacent RuvB subunits; this complex drives branch migration. In the full resolvosome a probable DNA-RuvA(4)-RuvB(12)-RuvC(2) complex forms which resolves the HJ.

It localises to the cytoplasm. The RuvA-RuvB-RuvC complex processes Holliday junction (HJ) DNA during genetic recombination and DNA repair, while the RuvA-RuvB complex plays an important role in the rescue of blocked DNA replication forks via replication fork reversal (RFR). RuvA specifically binds to HJ cruciform DNA, conferring on it an open structure. The RuvB hexamer acts as an ATP-dependent pump, pulling dsDNA into and through the RuvAB complex. HJ branch migration allows RuvC to scan DNA until it finds its consensus sequence, where it cleaves and resolves the cruciform DNA. The sequence is that of Holliday junction branch migration complex subunit RuvA from Photobacterium profundum (strain SS9).